An 86-amino-acid chain; its full sequence is Hepcidin-1 (86 aa).

The first 22 residues, 1–22 (MKAFSVAVVLVIACMFILESTA), serve as a signal peptide directing secretion. A propeptide spanning residues 23–59 (VPFSEVRTEEVGSFDSPVGEHQQPGGESMHLPEPFRF) is cleaved from the precursor. 4 disulfide bridges follow: cysteine 68-cysteine 84, cysteine 71-cysteine 74, cysteine 72-cysteine 80, and cysteine 75-cysteine 83.

This sequence belongs to the hepcidin family.

The protein resides in the secreted. Functionally, seems to act as a signaling molecule involved in the maintenance of iron homeostasis. Seems to be required in conjunction with HFE to regulate both intestinal iron absorption and iron storage in macrophages. May also have antimicrobial activity. The chain is Hepcidin-1 (hamp1) from Salmo salar (Atlantic salmon).